The sequence spans 483 residues: MAYIEGNTGKWEYVIGLEIHAQISSKSKLFSGSSTIFAANPNSQVSYVDAAMPGMLPVLNKHCVHQAIKTGLGLKAKINKYSVFDRKNYFYADLPQGYQISQFYYPIVQNGTMEIPTSTGDLKTIRINRLHLEQDAGKSMHDQSPHYSFIDLNRAGIGLMEIVTEPDISSPEEAAEFVKKLRNLLRYIGSCDGDMEKGSMRCDANISVRRSGEPLGTRCEIKNINSIRNIIKAIEFEAKRQVDLLESGEEIIQETRLFNADSGETRTMRLKEEALDYRYFPDPDLLPLVISDELINELKANLPELPDQKIEKYTKEFSLSKYDAEVIVADESVAEYFEKAANECNPKMLTNWLTSELFGQLNKASIGINECKITPSNFAKLVKLIENDTISGKIAKTVFEIMFETGKAPDKIVEEKGLVQVSDNNVLNTVIDEVIAENPESVEGYRSGKDKLFGFFVGQVMKKTGGKANPTLVNQLLKEKLSS.

This sequence belongs to the GatB/GatE family. GatB subfamily. As to quaternary structure, heterotrimer of A, B and C subunits.

The enzyme catalyses L-glutamyl-tRNA(Gln) + L-glutamine + ATP + H2O = L-glutaminyl-tRNA(Gln) + L-glutamate + ADP + phosphate + H(+). It catalyses the reaction L-aspartyl-tRNA(Asn) + L-glutamine + ATP + H2O = L-asparaginyl-tRNA(Asn) + L-glutamate + ADP + phosphate + 2 H(+). Allows the formation of correctly charged Asn-tRNA(Asn) or Gln-tRNA(Gln) through the transamidation of misacylated Asp-tRNA(Asn) or Glu-tRNA(Gln) in organisms which lack either or both of asparaginyl-tRNA or glutaminyl-tRNA synthetases. The reaction takes place in the presence of glutamine and ATP through an activated phospho-Asp-tRNA(Asn) or phospho-Glu-tRNA(Gln). This chain is Aspartyl/glutamyl-tRNA(Asn/Gln) amidotransferase subunit B, found in Rickettsia africae (strain ESF-5).